Consider the following 449-residue polypeptide: Glycoprotein endo-alpha-1,2-mannosidase (449 aa).

Over 1–8 the chain is Cytoplasmic; that stretch reads MIRFRRRT. The chain crosses the membrane as a helical; Signal-anchor for type II membrane protein span at residues 9 to 29; it reads CITLSIFIFLVCLIMAGLKHL. The Lumenal segment spans residues 30–449; it reads RPENAAFGSP…YMKEKEHWLV (420 aa). Residues 59 to 449 are catalytic; it reads DSENHLKGNT…YMKEKEHWLV (391 aa).

This sequence belongs to the glycosyl hydrolase 99 family.

The protein localises to the golgi apparatus membrane. It catalyses the reaction N-{alpha-Glc-(1-&gt;3)-alpha-Man-(1-&gt;2)-alpha-Man-(1-&gt;2)-alpha-Man-(1-&gt;3)-[alpha-Man-(1-&gt;2)-alpha-Man-(1-&gt;3)-[alpha-Man-(1-&gt;2)-alpha-Man-(1-&gt;6)]-alpha-Man-(1-&gt;6)]-beta-Man-(1-&gt;4)-beta-GlcNAc-(1-&gt;4)-beta-GlcNAc}-L-asparaginyl-[protein] + H2O = alpha-D-glucosyl-(1-&gt;3)-D-mannopyranose + N(4)-{alpha-D-Man-(1-&gt;2)-alpha-D-Man-(1-&gt;3)-[alpha-D-Man-(1-&gt;2)-alpha-D-Man-(1-&gt;3)-[alpha-D-Man-(1-&gt;2)-alpha-D-Man-(1-&gt;6)]-alpha-D-Man-(1-&gt;6)]-beta-D-Man-(1-&gt;4)-beta-D-GlaNAc-(1-&gt;4)-beta-D-GlcNAc}-L-asparaginyl-[protein] (N-glucan mannose isomer 8A1,2,3B1,2). The protein is Glycoprotein endo-alpha-1,2-mannosidase (manea) of Xenopus laevis (African clawed frog).